Reading from the N-terminus, the 636-residue chain is Multicopper oxidase CTB12 (636 aa).

Residues 1–23 form the signal peptide; the sequence is MWSVRLYPLALTLLFQCVSPAAA. One can recognise a Plastocyanin-like 1 domain in the interval 62–168; that stretch reads AGIGFREAIF…LYGAVVIAPD (107 aa). Cu cation-binding residues include His104 and His106. N-linked (GlcNAc...) asparagine glycosylation is present at Asn136. 2 residues coordinate Cu cation: His148 and His150. Residue Asn304 is glycosylated (N-linked (GlcNAc...) asparagine). The Plastocyanin-like 2 domain occupies 318–381; it reads LTFVNPGGLY…QEKARHVVRV (64 aa). The N-linked (GlcNAc...) asparagine glycan is linked to Asn472. Positions 486-613 constitute a Plastocyanin-like 3 domain; that stretch reads NVEDVPATEL…GGMGMVVLDG (128 aa). Cu cation-binding residues include His519, His522, and His524. N-linked (GlcNAc...) asparagine glycosylation occurs at Asn576. Positions 595, 596, 597, and 601 each coordinate Cu cation.

It belongs to the multicopper oxidase family.

It functions in the pathway mycotoxin biosynthesis. Its function is as follows. Multicopper oxidase; part of the gene cluster that mediates the biosynthesis of cercosporin, a light-activated, non-host-selective toxin. The perylenequinone chromophore of cercosporin absorbs light energy to attain an electronically-activated triplet state and produces active oxygen species such as the hydroxyl radical, superoxide, hydrogen peroxide or singlet oxygen upon reaction with oxygen molecules. These reactive oxygen species cause damage to various cellular components including lipids, proteins and nucleic acids. The first step of cercosporin biosynthesis is performed by the polyketide synthase CTB1 which catalyzes the formation of nor-toralactone. The starter unit acyltransferase (SAT) domain of CTB1 initiates polyketide extension by the selective utilization of acetyl-CoA, which is elongated to the heptaketide in the beta-ketoacyl synthase (KS) domain by successive condensations with six malonyl units introduced by the malonyl acyltransferase (MAT) domain. The product template (PT) domain catalyzes C4-C9 and C2-C11 aldol cyclizations and dehydrations to a trihydroxynaphthalene, which is thought to be delivered to the thioesterase (TE) domain for product release. The bifunctional enzyme CTB3 then methylates nor-toralactone to toralactone before conducting an unusual oxidative aromatic ring opening. The O-methyltransferase CTB2 further methylates the nascent OH-6 of the CBT3 product, blocking further oxidation at this site before the reductase CTB6 reduces the 2-oxopropyl ketone at position C7, giving naphthalene. The FAD-dependent monooxygenase CTB5 in concert with the multicopper oxidase CTB12 are responsible for homodimerization of naphthalene with CTB7 installing the dioxepine moiety, finally producing cercosporin. The fasciclin domain-containing protein CTB11 might act with CTB5 and CTB12 whereas the roles of CTB9 and CTB10 have still to be elucidated. The chain is Multicopper oxidase CTB12 from Cercospora beticola (Sugarbeet leaf spot fungus).